We begin with the raw amino-acid sequence, 355 residues long: Ubiquinone biosynthesis protein COQ4 homolog, mitochondrial (355 aa).

Residues histidine 134, aspartate 135, histidine 138, and glutamate 150 each contribute to the Zn(2+) site.

This sequence belongs to the COQ4 family. As to quaternary structure, component of a multi-subunit COQ enzyme complex. Requires Zn(2+) as cofactor.

The protein localises to the mitochondrion inner membrane. The catalysed reaction is a 4-hydroxy-3-methoxy-5-(all-trans-polyprenyl)benzoate + H(+) = a 2-methoxy-6-(all-trans-polyprenyl)phenol + CO2. Its pathway is cofactor biosynthesis; ubiquinone biosynthesis. In terms of biological role, lyase that catalyzes the C1-decarboxylation of 4-hydroxy-3-methoxy-5-(all-trans-polyprenyl)benzoic acid into 2-methoxy-6-(all-trans-polyprenyl)phenol during ubiquinone biosynthesis. This chain is Ubiquinone biosynthesis protein COQ4 homolog, mitochondrial, found in Plasmodium chabaudi chabaudi.